Reading from the N-terminus, the 122-residue chain is Large ribosomal subunit protein uL14 (122 aa).

This sequence belongs to the universal ribosomal protein uL14 family. Part of the 50S ribosomal subunit. Forms a cluster with proteins L3 and L19. In the 70S ribosome, L14 and L19 interact and together make contacts with the 16S rRNA in bridges B5 and B8.

Its function is as follows. Binds to 23S rRNA. Forms part of two intersubunit bridges in the 70S ribosome. The protein is Large ribosomal subunit protein uL14 of Delftia acidovorans (strain DSM 14801 / SPH-1).